The following is a 171-amino-acid chain: ATP synthase subunit b (171 aa).

A helical membrane pass occupies residues 10 to 30; the sequence is GLYYGDSIFYAVCFLLLMWII.

It belongs to the ATPase B chain family. As to quaternary structure, F-type ATPases have 2 components, F(1) - the catalytic core - and F(0) - the membrane proton channel. F(1) has five subunits: alpha(3), beta(3), gamma(1), delta(1), epsilon(1). F(0) has three main subunits: a(1), b(2) and c(10-14). The alpha and beta chains form an alternating ring which encloses part of the gamma chain. F(1) is attached to F(0) by a central stalk formed by the gamma and epsilon chains, while a peripheral stalk is formed by the delta and b chains.

The protein localises to the cell membrane. F(1)F(0) ATP synthase produces ATP from ADP in the presence of a proton or sodium gradient. F-type ATPases consist of two structural domains, F(1) containing the extramembraneous catalytic core and F(0) containing the membrane proton channel, linked together by a central stalk and a peripheral stalk. During catalysis, ATP synthesis in the catalytic domain of F(1) is coupled via a rotary mechanism of the central stalk subunits to proton translocation. In terms of biological role, component of the F(0) channel, it forms part of the peripheral stalk, linking F(1) to F(0). The polypeptide is ATP synthase subunit b (Levilactobacillus brevis (strain ATCC 367 / BCRC 12310 / CIP 105137 / JCM 1170 / LMG 11437 / NCIMB 947 / NCTC 947) (Lactobacillus brevis)).